The following is a 170-amino-acid chain: Endoribonuclease YbeY (170 aa).

3 residues coordinate Zn(2+): His128, His132, and His138.

This sequence belongs to the endoribonuclease YbeY family. Zn(2+) serves as cofactor.

Its subcellular location is the cytoplasm. Single strand-specific metallo-endoribonuclease involved in late-stage 70S ribosome quality control and in maturation of the 3' terminus of the 16S rRNA. The protein is Endoribonuclease YbeY of Ruegeria sp. (strain TM1040) (Silicibacter sp.).